We begin with the raw amino-acid sequence, 339 residues long: Glycerol-3-phosphate dehydrogenase [NAD(P)+] (339 aa).

NADPH contacts are provided by S31, W32, R52, and K122. Sn-glycerol 3-phosphate-binding residues include K122 and G152. A156 serves as a coordination point for NADPH. 5 residues coordinate sn-glycerol 3-phosphate: K207, D260, S270, R271, and N272. Catalysis depends on K207, which acts as the Proton acceptor. R271 lines the NADPH pocket. E293 contributes to the NADPH binding site.

Belongs to the NAD-dependent glycerol-3-phosphate dehydrogenase family.

The protein localises to the cytoplasm. The enzyme catalyses sn-glycerol 3-phosphate + NAD(+) = dihydroxyacetone phosphate + NADH + H(+). The catalysed reaction is sn-glycerol 3-phosphate + NADP(+) = dihydroxyacetone phosphate + NADPH + H(+). The protein operates within membrane lipid metabolism; glycerophospholipid metabolism. Its function is as follows. Catalyzes the reduction of the glycolytic intermediate dihydroxyacetone phosphate (DHAP) to sn-glycerol 3-phosphate (G3P), the key precursor for phospholipid synthesis. This chain is Glycerol-3-phosphate dehydrogenase [NAD(P)+], found in Tropheryma whipplei (strain Twist) (Whipple's bacillus).